A 345-amino-acid chain; its full sequence is MNASLYQQYVQAKAEHPGKYARDLATLMGISEAELTHSRVGHDAKRLQSDARALLAALESVGEVKAITRNTYAVHEQVGRYENQHLNGHAGLILNPRALDLRLFLNQWASAFTLTEETRHGVRHSIQFFDHQGDALHKVYVTEQTDMSAWEALLAQFIIPENPALQLEPLSTPEAVEPTADDATVDSEWRAMTDVHQFFQLLKRNNLTRQQAFRAVGDDLAYQVDNNSLTQLLHIAQQDQNEIMIFVGNRGCVQIFTGLIEKVTPHNEWINVFNQRFTLHLIETAIAESWITRKPTKDGFVTSLELFAADGTQLAQLYGQRTEGQPEQNQWREQIARLINKDIAA.

This sequence to Y.enterocolitica HemS.

Functionally, part of the binding-protein-dependent transport system for hemin. The protein is Hemin transport protein HmuS (hmuS) of Yersinia pestis.